Reading from the N-terminus, the 262-residue chain is UPF0758 protein R01728 (262 aa).

The disordered stretch occupies residues 23–44; it reads PEKRTRNSPATAPAPATDTHYH. The span at 31-40 shows a compositional bias: low complexity; it reads PATAPAPATD. In terms of domain architecture, MPN spans 140-262; sequence VLSSWSAVID…HVSLKGLRLF (123 aa). Zn(2+) is bound by residues H211, H213, and D224. Positions 211 to 224 match the JAMM motif motif; it reads HNHPSGDPTPSRAD.

Belongs to the UPF0758 family.

The protein is UPF0758 protein R01728 of Rhizobium meliloti (strain 1021) (Ensifer meliloti).